Reading from the N-terminus, the 1198-residue chain is Fibronectin type-III domain-containing protein 3A (1198 aa).

Residues 188–201 are compositionally biased toward basic and acidic residues; the sequence is KKLKDRQGTQKDKM. The disordered stretch occupies residues 188 to 257; that stretch reads KKLKDRQGTQ…VDPEMEEKDE (70 aa). Serine 203, serine 207, and serine 213 each carry phosphoserine. Fibronectin type-III domains follow at residues 268 to 369, 373 to 465, 469 to 562, 566 to 660, 664 to 757, 761 to 851, 863 to 950, 951 to 1045, and 1049 to 1151; these read NIVK…TLSC, PPNA…TSGC, VPAS…TCPD, VPVK…TPAV, PCLP…TAPG, QCRP…TPPS, SDDD…TKPL, PPDP…TPKS, and ALKA…TEPP. At lysine 384 the chain carries N6-acetyllysine. The helical transmembrane segment at 1177-1197 threads the bilayer; the sequence is ILVVFAFFSILIAFIIQYFVI.

The protein belongs to the FNDC3 family. In terms of tissue distribution, testis. Localizes to the acrosome of spermatids, as well as to Leydig cells. Can be detected on the acrosome beginning at steps 2-3 and continuing until step 12 of spermiogenesis.

The protein localises to the golgi apparatus membrane. Its function is as follows. Mediates spermatid-Sertoli adhesion during spermatogenesis. This Mus musculus (Mouse) protein is Fibronectin type-III domain-containing protein 3A (Fndc3a).